The chain runs to 234 residues: 1-(5-phosphoribosyl)-5-[(5-phosphoribosylamino)methylideneamino] imidazole-4-carboxamide isomerase (234 aa).

Aspartate 8 acts as the Proton acceptor in catalysis. The Proton donor role is filled by aspartate 128.

The protein belongs to the HisA/HisF family.

Its subcellular location is the cytoplasm. The enzyme catalyses 1-(5-phospho-beta-D-ribosyl)-5-[(5-phospho-beta-D-ribosylamino)methylideneamino]imidazole-4-carboxamide = 5-[(5-phospho-1-deoxy-D-ribulos-1-ylimino)methylamino]-1-(5-phospho-beta-D-ribosyl)imidazole-4-carboxamide. Its pathway is amino-acid biosynthesis; L-histidine biosynthesis; L-histidine from 5-phospho-alpha-D-ribose 1-diphosphate: step 4/9. The protein is 1-(5-phosphoribosyl)-5-[(5-phosphoribosylamino)methylideneamino] imidazole-4-carboxamide isomerase of Cenarchaeum symbiosum (strain A).